The following is a 404-amino-acid chain: 11-beta-hydroxysteroid dehydrogenase type 2 (404 aa).

T82–A111 contacts NAD(+). S219 is a binding site for substrate. The active-site Proton acceptor is the Y232. Residues L383–Q404 form a disordered region.

The protein belongs to the short-chain dehydrogenases/reductases (SDR) family. As to quaternary structure, interacts with ligand-free cytoplasmic NR3C2. In terms of tissue distribution, highly expressed in kidney, adrenal and colon; detected at lower levels on lung, liver, and spleen. Expressed in oocytes. Expressed in uterine tissues and in corpora lutea.

It localises to the microsome. The protein localises to the endoplasmic reticulum. The catalysed reaction is an 11beta-hydroxysteroid + NAD(+) = an 11-oxosteroid + NADH + H(+). It catalyses the reaction corticosterone + NAD(+) = 11-dehydrocorticosterone + NADH + H(+). It carries out the reaction cortisol + NAD(+) = cortisone + NADH + H(+). The enzyme catalyses 11beta,17beta-dihydroxyandrost-4-ene-3-one + NAD(+) = 17beta-hydroxyandrost-4-ene-3,11-dione + NADH + H(+). The catalysed reaction is 11beta-hydroxyandrost-4-ene-3,17-dione + NAD(+) = androst-4-ene-3,11,17-trione + NADH + H(+). Its pathway is steroid metabolism. Inhibited by glycyrrhetinic acid, carbenoloxone, 11-alpha-OH-progesterone and 11-beta-OH-progesterone. Functionally, catalyzes the conversion of biologically active 11beta-hydroxyglucocorticoids (11beta-hydroxysteroid) such as cortisol, to inactive 11-ketoglucocorticoids (11-oxosteroid) such as cortisone, in the presence of NAD(+). Functions as a dehydrogenase (oxidase), thereby decreasing the concentration of active glucocorticoids, thus protecting the nonselective mineralocorticoid receptor from occupation by glucocorticoids. Affinity towards corticosterone is higher than cortisol or dexamethasone. Plays an important role in maintaining glucocorticoids balance during preimplantation and protects the fetus from excessive maternal corticosterone exposure. Catalyzes the oxidation of 11beta-hydroxytestosterone (11beta,17beta-dihydroxyandrost-4-ene-3-one) to 11-ketotestosterone (17beta-hydroxyandrost-4-ene-3,11-dione), a major bioactive androgen. Catalyzes the conversion of 11beta-hydroxyandrostenedione (11beta-hydroxyandrost-4-ene-3,17-dione) to 11-ketoandrostenedione (androst-4-ene-3,11,17-trione), which can be further metabolized to 11-ketotestosterone. Converts 7-beta-25-dihydroxycholesterol to 7-oxo-25-hydroxycholesterol in vitro. 7-beta-25-dihydroxycholesterol (not 7-oxo-25-hydroxycholesterol) acts as ligand for the G-protein-coupled receptor (GPCR) Epstein-Barr virus-induced gene 2 (EBI2) and may thereby regulate immune cell migration. May protect ovulating oocytes and fertilizing spermatozoa from the adverse effects of cortisol. The sequence is that of 11-beta-hydroxysteroid dehydrogenase type 2 (HSD11B2) from Bos taurus (Bovine).